A 346-amino-acid chain; its full sequence is Biotin synthase (346 aa).

A Radical SAM core domain is found at N40–S264. [4Fe-4S] cluster contacts are provided by C55, C59, and C62. [2Fe-2S] cluster contacts are provided by C99, C130, C190, and R262.

Belongs to the radical SAM superfamily. Biotin synthase family. As to quaternary structure, homodimer. Requires [4Fe-4S] cluster as cofactor. It depends on [2Fe-2S] cluster as a cofactor.

The enzyme catalyses (4R,5S)-dethiobiotin + (sulfur carrier)-SH + 2 reduced [2Fe-2S]-[ferredoxin] + 2 S-adenosyl-L-methionine = (sulfur carrier)-H + biotin + 2 5'-deoxyadenosine + 2 L-methionine + 2 oxidized [2Fe-2S]-[ferredoxin]. It functions in the pathway cofactor biosynthesis; biotin biosynthesis; biotin from 7,8-diaminononanoate: step 2/2. Its function is as follows. Catalyzes the conversion of dethiobiotin (DTB) to biotin by the insertion of a sulfur atom into dethiobiotin via a radical-based mechanism. The protein is Biotin synthase of Colwellia psychrerythraea (strain 34H / ATCC BAA-681) (Vibrio psychroerythus).